The chain runs to 470 residues: 5-hydroxytryptamine receptor 2A (470 aa).

The Extracellular portion of the chain corresponds to 1–80; sequence MDILCEENTS…LQEKNWSALL (80 aa). The N-linked (GlcNAc...) asparagine glycan is linked to Asn-38. Residues 81-97 traverse the membrane as a helical segment; sequence TAVVIILTIAGNILVIM. Topologically, residues 98–111 are cytoplasmic; sequence AVSLEKKLQNATNY. The helical transmembrane segment at 112–137 threads the bilayer; it reads FLMSLAIADMLLGFLVMPVSTLTILY. At 138-146 the chain is on the extracellular side; that stretch reads GYRWPLPSK. The helical transmembrane segment at 147 to 171 threads the bilayer; the sequence is LCAVWIYLDVLFSTASIMHLCAISL. Cys-148 and Cys-227 are disulfide-bonded. Asp-155 lines the serotonin pocket. Residues 172-174 carry the DRY motif; important for ligand-induced conformation changes motif; it reads DRY. At 172 to 191 the chain is on the cytoplasmic side; that stretch reads DRYVAIQNPIHHSRFNSRTK. The chain crosses the membrane as a helical span at residues 192 to 215; it reads AFLKIIAVWTISVGISMPIPVFGL. Over 216 to 232 the chain is Extracellular; sequence QDDSKVFKEGSCLLADE. The chain crosses the membrane as a helical span at residues 233-258; that stretch reads NFVLIGSFVAFFIPLTIMVITYFLTI. At 259–321 the chain is on the cytoplasmic side; it reads KSLQKEATLC…QSISNEQKAC (63 aa). Ser-280 carries the phosphoserine modification. The chain crosses the membrane as a helical span at residues 322–347; that stretch reads KVLGIVFFLFVVMWCPFFITNIMAVI. Residue Asn-342 participates in serotonin binding. A disulfide bridge connects residues Cys-348 and Cys-352. Topologically, residues 348–355 are extracellular; the sequence is CKESCNRD. The chain crosses the membrane as a helical span at residues 356–381; that stretch reads VIEALLNVFVWIGYLSSAVNPLVYTL. An NPxxY motif; important for ligand-induced conformation changes and signaling motif is present at residues 375-379; that stretch reads NPLVY. Over 382–470 the chain is Cytoplasmic; the sequence is FNKTYRSAFS…NTVNEKVSCV (89 aa). The interval 424 to 470 is disordered; sequence QMGPKKNSKKDDKTTDNDCTMVALGKEHPEDAPADSSNTVNEKVSCV. Polar residues predominate over residues 458 to 470; that stretch reads DSSNTVNEKVSCV. The PDZ-binding signature appears at 468-470; it reads SCV.

Belongs to the G-protein coupled receptor 1 family. In terms of assembly, interacts (via C-terminus) with MPDZ and PATJ. May interact (via C-terminus) with MPP3, PRDX6, DLG4, DLG1, CASK, APBA1 and MAGI2. Interacts with GRM2 and DRD2; this may affect signaling.

It localises to the cell membrane. The protein localises to the cell projection. Its subcellular location is the dendrite. The protein resides in the axon. It is found in the cytoplasmic vesicle. It localises to the membrane. The protein localises to the caveola. Its subcellular location is the presynapse. G-protein coupled receptor activity is regulated by lipids: oleamide increases HTR2A-mediated activity. Its function is as follows. G-protein coupled receptor for 5-hydroxytryptamine (serotonin). Also functions as a receptor for various drugs and psychoactive substances, including mescaline, psilocybin, 1-(2,5-dimethoxy-4-iodophenyl)-2-aminopropane (DOI) and lysergic acid diethylamide (LSD). Ligand binding causes a conformation change that triggers signaling via guanine nucleotide-binding proteins (G proteins) and modulates the activity of downstream effectors. HTR2A is coupled to G(q)/G(11) G alpha proteins and activates phospholipase C-beta, releasing diacylglycerol (DAG) and inositol 1,4,5-trisphosphate (IP3) second messengers that modulate the activity of phosphatidylinositol 3-kinase and promote the release of Ca(2+) ions from intracellular stores, respectively. Beta-arrestin family members inhibit signaling via G proteins and mediate activation of alternative signaling pathways. Affects neural activity, perception, cognition and mood. Plays a role in the regulation of behavior, including responses to anxiogenic situations and psychoactive substances. Plays a role in intestinal smooth muscle contraction, and may play a role in arterial vasoconstriction. This is 5-hydroxytryptamine receptor 2A (HTR2A) from Bos taurus (Bovine).